The sequence spans 134 residues: Putative pre-16S rRNA nuclease (134 aa).

It belongs to the YqgF nuclease family.

The protein localises to the cytoplasm. In terms of biological role, could be a nuclease involved in processing of the 5'-end of pre-16S rRNA. In Helicobacter pylori (strain P12), this protein is Putative pre-16S rRNA nuclease.